A 220-amino-acid polypeptide reads, in one-letter code: Putative respiratory nitrate reductase subunit Rieske (220 aa).

The Rieske domain maps to 118–206; the sequence is KAPTLLVRHA…ITVSSEGYLI (89 aa). [2Fe-2S] cluster is bound by residues C151, H153, C168, and H171. C156 and C170 are joined by a disulfide.

Probable multiprotein complex; a catalytic heterodimer of an alpha and beta chain is proposed to associate with additional subunits involved in membrane attachment and electron transfer. Requires [2Fe-2S] cluster as cofactor.

The protein localises to the cell membrane. The respiratory membrane-bound nitrate reductase enzyme complex plays a role in generation of metabolic energy by using nitrate as a terminal electron acceptor during anaerobic conditions. Proposed Rieske subunit involved in a protonmotive Q-cycle mechanism-based electron transfer electrons to the beta subunit. The protein is Putative respiratory nitrate reductase subunit Rieske (narB) of Haloferax mediterranei (strain ATCC 33500 / DSM 1411 / JCM 8866 / NBRC 14739 / NCIMB 2177 / R-4) (Halobacterium mediterranei).